The chain runs to 324 residues: MITSNRKPTVPDFMRPVAELESQVAELKRLAPKNDKVIENKINRFQDKLTKLQKEIFSSLTPLQRLNLVRQSERPTTLDYIPNILDEWIELHGDRGGADDPALVGGIGKIDGHSIVFIGHQRGRGTKENVARNFGMPAPGGYRKALRLMKHANRFGMPILTFIDTPGAWAGLKAEELGQGEAIAVNLREMFSFEVPIICTIIGEGGSGGALGIGIGDSIIMLEYAVYTVATPEACAAILWKNSKESLAAAEALKITSHDLKVMGIVDEILTEPIGGAQADHQSASKYLRKELIKQLNILLRLNKSELKIQRYEKFRKMGAFYEI.

Residues 44 to 298 (RFQDKLTKLQ…RKELIKQLNI (255 aa)) form the CoA carboxyltransferase C-terminal domain.

This sequence belongs to the AccA family. In terms of assembly, acetyl-CoA carboxylase is a heterohexamer composed of biotin carboxyl carrier protein (accB), biotin carboxylase (accC) and two subunits each of ACCase subunit alpha (accA) and ACCase subunit beta (accD).

Its subcellular location is the plastid. It is found in the chloroplast. It carries out the reaction N(6)-carboxybiotinyl-L-lysyl-[protein] + acetyl-CoA = N(6)-biotinyl-L-lysyl-[protein] + malonyl-CoA. It functions in the pathway lipid metabolism; malonyl-CoA biosynthesis; malonyl-CoA from acetyl-CoA: step 1/1. Component of the acetyl coenzyme A carboxylase (ACC) complex. First, biotin carboxylase catalyzes the carboxylation of biotin on its carrier protein (BCCP) and then the CO(2) group is transferred by the carboxyltransferase to acetyl-CoA to form malonyl-CoA. The chain is Acetyl-coenzyme A carboxylase carboxyl transferase subunit alpha from Porphyra purpurea (Red seaweed).